Reading from the N-terminus, the 572-residue chain is Excitatory amino acid transporter 2 (572 aa).

A compositionally biased stretch (polar residues) spans 1–11; it reads MASTEGANNMP. Residues 1-28 are disordered; the sequence is MASTEGANNMPKQVEVRMHDSHLSSDEP. The Cytoplasmic portion of the chain corresponds to 1-44; sequence MASTEGANNMPKQVEVRMHDSHLSSDEPKHRNLGMRMCDKLGKN. Phosphoserine occurs at positions 3, 21, 24, and 25. Over residues 14-28 the composition is skewed to basic and acidic residues; the sequence is VEVRMHDSHLSSDEP. Cys-38 is lipidated: S-palmitoyl cysteine. A run of 3 helical transmembrane segments spans residues 45–64, 88–108, and 121–142; these read LLLS…GGLL, MLKM…LSGL, and MVYY…VLAI. 2 N-linked (GlcNAc...) asparagine glycosylation sites follow: Asn-205 and Asn-215. 3 consecutive transmembrane segments (helical) span residues 235–258, 268–295, and 317–338; these read FKDG…MGKM, FFNI…ACLI, and ITVI…YFVV. An intramembrane region (discontinuously helical) is located at residues 344–374; sequence FSFFAGIFQAWITALGTASSAGTLPVTFRCL. 361–363 contacts L-aspartate; that stretch reads ASS. The helical transmembrane segment at 384 to 410 threads the bilayer; it reads VTRFVLPVGATINMDGTALYEAVAAIF. Na(+) is bound by residues Gly-392, Thr-394, and Asn-396. L-aspartate-binding positions include Thr-400, 441 to 445, Asp-474, and Asn-481; that span reads IPSAG. Residues 424 to 457 constitute an intramembrane region (discontinuously helical); it reads IVTVSLTATLASIGAASIPSAGLVTMLLILTAVG. A helical transmembrane segment spans residues 471–492; that stretch reads WLLDRMRTSVNVVGDSFGAGIV. Positions 481 and 485 each coordinate Na(+). Phosphoserine is present on residues Ser-505, Ser-520, Ser-530, and Ser-532. Phosphotyrosine is present on Tyr-537. A phosphoserine mark is found at Ser-542, Ser-558, and Ser-562.

This sequence belongs to the dicarboxylate/amino acid:cation symporter (DAACS) (TC 2.A.23) family. SLC1A2 subfamily. Homotrimer. Interacts with AJUBA. Glycosylated. Post-translationally, palmitoylation at Cys-38 is not required for correct subcellular localization, but is important for glutamate uptake activity. As to expression, detected in brain. Detected in embryonic forebrain, especially in globus pallidus, perirhinal cortex, lateral hypothalamus, hippocampus, and on fimbria and axonal pathways connecting the neocortex, basal ganglia and thalamus (at protein level). Isoform GLT1 is expressed in the brain. Isoforms GLT-1A and GLT-1B are expressed in the liver.

The protein localises to the cell membrane. The enzyme catalyses K(+)(in) + L-glutamate(out) + 3 Na(+)(out) + H(+)(out) = K(+)(out) + L-glutamate(in) + 3 Na(+)(in) + H(+)(in). It carries out the reaction K(+)(in) + L-aspartate(out) + 3 Na(+)(out) + H(+)(out) = K(+)(out) + L-aspartate(in) + 3 Na(+)(in) + H(+)(in). The catalysed reaction is D-aspartate(out) + K(+)(in) + 3 Na(+)(out) + H(+)(out) = D-aspartate(in) + K(+)(out) + 3 Na(+)(in) + H(+)(in). Its function is as follows. Sodium-dependent, high-affinity amino acid transporter that mediates the uptake of L-glutamate and also L-aspartate and D-aspartate. Functions as a symporter that transports one amino acid molecule together with two or three Na(+) ions and one proton, in parallel with the counter-transport of one K(+) ion. Mediates Cl(-) flux that is not coupled to amino acid transport; this avoids the accumulation of negative charges due to aspartate and Na(+) symport. Essential for the rapid removal of released glutamate from the synaptic cleft, and for terminating the postsynaptic action of glutamate. This is Excitatory amino acid transporter 2 (Slc1a2) from Mus musculus (Mouse).